The sequence spans 288 residues: MVKITILSPEGRSCSVWSLKNEIEKLGAKCDIFLLSSPENLMSHDFKLETDLIHSRCGIGDYFDRLTLYSWQFINALEVEGCRFINPIKTLYLTSDKFKCIKLLAKNKIKTPKTALIRDYEDAVKFIEKYNLRFPVVIKNSFSKCGLKVFMARNYDELKQLTKNAIWEGKLIQEFIDFKENDLYRDMRILVVDGEVVGGYRRVSRDFRTNLYLGNVVEKLNIDEELEELALKCADLSEAVILGVDILPTKDNYYVIELNSSPGTKGFRDIGINADKKIAEALVRYAKS.

Residues 101–287 (IKLLAKNKIK…IAEALVRYAK (187 aa)) form the ATP-grasp domain. ATP is bound by residues Lys139, 173 to 186 (QEFI…LYRD), and Arg202. The Mn(2+) site is built by Asp245, Glu257, and Asn259.

It belongs to the RimK family. CofF subfamily. In terms of assembly, monomer. The cofactor is Mn(2+).

The catalysed reaction is oxidized coenzyme F420-2 + L-glutamate + ATP = oxidized coenzyme alpha-F420-3 + ADP + phosphate + H(+). The protein operates within cofactor biosynthesis; coenzyme F420 biosynthesis. With respect to regulation, inhibited by KCl. Its function is as follows. Catalyzes the ATP-dependent addition of one alpha-linked L-glutamate molecule to coenzyme gamma-F420-2, producing alpha-F420-3, the major form of coenzyme F420 found in M.jannaschii. Thus, caps the gamma-polyglutamate tail of coenzyme F420 with a terminal alpha-linked glutamate. Prefers ATP to other purine nucleotide triphosphates; GTP gives about 25% of the activity observed with ATP. Cannot catalyze the addition of the following amino acids or analogs: D-glutamate, beta-glutamate, L-aspartate, L-glutamine, L-alpha-aminoadipate, or D,L-2-amino-4-phosphono-butyrate. The sequence is that of Coenzyme gamma-F420-2:alpha-L-glutamate ligase (cofF) from Methanocaldococcus jannaschii (strain ATCC 43067 / DSM 2661 / JAL-1 / JCM 10045 / NBRC 100440) (Methanococcus jannaschii).